The sequence spans 758 residues: MTIQTATLGYPRIGKNRELKKALEAFWSNQLDAEALLKTAQDIELQNWQKQLEVGIDRIGIGDLSLYDSVLDWSIRFGIIPERYRSFTGLEQYFAMARGKDGIPALEMTKWFDTNYHYLVPEISEAFQPTDFSDFLETVRRAQTLLGDRAVPIVLGPLTLLRLSRLETNLEQAVSYLRDRYLILLRELKNLGVVEVQIHEPALVLEEADSFKSFYQSTFDTLRQANLPLHLVTYFDDLGAAWPWVMELPVTCISLDFTRGHNLALLKEYGFPADKQLGVGIIDGRNIWKIRPESVLSTLETIQSITANIRLHPSSSLQFVPYDAKREVKLPEPLRDVLSFAEQKLDEVVLLARVLNSNDGTNREILMKNPELTAIQAQWKAFEQFSPVNPTVQARLRNLSVRDLERPLPYEQRRTLQPTLPPLPTTTIGSFPQTAEVRQLRVKLKRHEITQAEYEAAIDEEIAKCVRLQEEVGLDVLVHGEFERSDMVEFFGQQLSGFAFTEHGWVQSYGSRCVRPPIIYGDIARPQPMTVREFKVAQSLTDKIVKAMLTGPVTMINWSFTRTDIPRSEQAMQIALALRDEVADLEAAGAKMIQIDEPALREGLPLKAERWNEYLSWAVDAFRLAAGVAKPETQIHTHMCYSEFGDIIEHIERLDADVLSIENSRSNNETLFQITDAGYRHQVGVGVYDVHSPAVPSVEQLVQQLRTSVANLAPEQIWVNPDCGLKTRHWEEVIPSLKNMVEATKTIRQEVMQSKNNA.

5-methyltetrahydropteroyltri-L-glutamate-binding positions include 17–20 (RELK) and Lys110. L-homocysteine-binding positions include 428–430 (IGS) and Glu481. Residues 428 to 430 (IGS) and Glu481 contribute to the L-methionine site. 5-methyltetrahydropteroyltri-L-glutamate contacts are provided by residues 512–513 (RC) and Trp558. Asp596 lines the L-homocysteine pocket. Residue Asp596 coordinates L-methionine. Residue Glu602 coordinates 5-methyltetrahydropteroyltri-L-glutamate. Positions 638, 640, and 662 each coordinate Zn(2+). His691 (proton donor) is an active-site residue. Cys723 contacts Zn(2+).

This sequence belongs to the vitamin-B12 independent methionine synthase family. The cofactor is Zn(2+).

The catalysed reaction is 5-methyltetrahydropteroyltri-L-glutamate + L-homocysteine = tetrahydropteroyltri-L-glutamate + L-methionine. The protein operates within amino-acid biosynthesis; L-methionine biosynthesis via de novo pathway; L-methionine from L-homocysteine (MetE route): step 1/1. Functionally, catalyzes the transfer of a methyl group from 5-methyltetrahydrofolate to homocysteine resulting in methionine formation. The protein is 5-methyltetrahydropteroyltriglutamate--homocysteine methyltransferase of Thermosynechococcus vestitus (strain NIES-2133 / IAM M-273 / BP-1).